We begin with the raw amino-acid sequence, 288 residues long: Pantothenate synthetase (288 aa).

30–37 (MGALHEGH) contributes to the ATP binding site. His-37 functions as the Proton donor in the catalytic mechanism. Gln-61 is a (R)-pantoate binding site. Gln-61 provides a ligand contact to beta-alanine. 147–150 (GEKD) contributes to the ATP binding site. Residue Gln-153 participates in (R)-pantoate binding. ATP contacts are provided by residues Val-176 and 184–187 (ISSR).

This sequence belongs to the pantothenate synthetase family. Homodimer.

The protein localises to the cytoplasm. The enzyme catalyses (R)-pantoate + beta-alanine + ATP = (R)-pantothenate + AMP + diphosphate + H(+). The protein operates within cofactor biosynthesis; (R)-pantothenate biosynthesis; (R)-pantothenate from (R)-pantoate and beta-alanine: step 1/1. Its function is as follows. Catalyzes the condensation of pantoate with beta-alanine in an ATP-dependent reaction via a pantoyl-adenylate intermediate. The protein is Pantothenate synthetase of Chlorobium phaeobacteroides (strain BS1).